Reading from the N-terminus, the 1180-residue chain is Phosphatidylinositol 4-kinase (1180 aa).

A PIK helical domain is found at 1-206 (MNKISDTIII…SVYLHSPSTS (206 aa)). 5 disordered regions span residues 15–84 (NEDE…KHKE), 257–327 (ENDH…ENDN), 355–391 (TSPIKDDMENNNNNNNNNNNNNNNNNNNNNINNNNIN), 768–799 (TISNSSDSCTTETTTTSPVATSPTLPINIPHS), and 832–894 (AISP…SPFG). A compositionally biased stretch (low complexity) spans 38-74 (NNNNNNILTNVNNNKNNTITSSGGSDSSSSSSNNNNN). The segment covering 75 to 84 (KIKKSKKHKE) has biased composition (basic residues). The span at 257–270 (ENDHHIENDPKKDI) shows a compositional bias: basic and acidic residues. Low complexity-rich tracts occupy residues 271–325 (NSNN…SGEN), 364–391 (NNNNNNNNNNNNNNNNNNNNNINNNNIN), 768–793 (TISNSSDSCTTETTTTSPVATSPTLP), and 835–879 (PPSQ…SPTN). In terms of domain architecture, PI3K/PI4K catalytic spans 895-1164 (ESWQEKIERY…LISYSIDHFK (270 aa)). Residues 901-907 (IERYKKI) form a G-loop region. Positions 1030–1038 (QIKDRHNGN) are catalytic loop. Positions 1049-1073 (HIDFGFILSNSPGNISFESAPFKLT) are activation loop.

Belongs to the PI3/PI4-kinase family. Type III PI4K subfamily.

The catalysed reaction is a 1,2-diacyl-sn-glycero-3-phospho-(1D-myo-inositol) + ATP = a 1,2-diacyl-sn-glycero-3-phospho-(1D-myo-inositol 4-phosphate) + ADP + H(+). Acts on phosphatidylinositol (PtdIns) in the first committed step in the production of the second messenger inositol-1,4,5,-trisphosphate. The protein is Phosphatidylinositol 4-kinase (pikD) of Dictyostelium discoideum (Social amoeba).